The following is a 170-amino-acid chain: MKDNERRILLGRIVGAFGVRGEIKLESWTEPRSAIFRYQPWILRSPNGQESTLEGARGRDSGKHLVARFPGIEDRDTVEAMHGTEVYVARSALPPPNADEYYWVDLEGLDVKTTEGVALGQVSHLFSTGANDVVVVRGDRERMIPFVLPEFVKSVDFEANLVVVDWDPEF.

Residues 97-170 (NADEYYWVDL…LVVVDWDPEF (74 aa)) form the PRC barrel domain.

The protein belongs to the RimM family. In terms of assembly, binds ribosomal protein uS19.

The protein resides in the cytoplasm. Its function is as follows. An accessory protein needed during the final step in the assembly of 30S ribosomal subunit, possibly for assembly of the head region. Essential for efficient processing of 16S rRNA. May be needed both before and after RbfA during the maturation of 16S rRNA. It has affinity for free ribosomal 30S subunits but not for 70S ribosomes. The sequence is that of Ribosome maturation factor RimM from Stenotrophomonas maltophilia (strain R551-3).